We begin with the raw amino-acid sequence, 390 residues long: Na(+)/H(+) antiporter NhaA 2 (390 aa).

A run of 11 helical transmembrane segments spans residues 23–43 (IVLI…LAAA), 63–83 (LHLW…GLEI), 100–120 (LPVL…LAIT), 129–149 (GWAI…ALVG), 158–178 (LFLL…IALF), 181–201 (SGLK…LVLV), 208–228 (ALLP…HSGI), 265–285 (GFVI…GADF), 293–313 (LGIA…SILV), 331–351 (LWGI…IAGL), and 362–382 (EAKL…LLVL).

The protein belongs to the NhaA Na(+)/H(+) (TC 2.A.33) antiporter family.

Its subcellular location is the cell inner membrane. It carries out the reaction Na(+)(in) + 2 H(+)(out) = Na(+)(out) + 2 H(+)(in). Na(+)/H(+) antiporter that extrudes sodium in exchange for external protons. The chain is Na(+)/H(+) antiporter NhaA 2 from Novosphingobium aromaticivorans (strain ATCC 700278 / DSM 12444 / CCUG 56034 / CIP 105152 / NBRC 16084 / F199).